The chain runs to 79 residues: Serine protease inhibitor Kazal-type 1 (79 aa).

Positions 1-23 (MKVASIFLLTALVLMSLSGNSGA) are cleaved as a signal peptide. The region spanning 26-79 (LGREAKCTNEVNGCPRIYNPVCGTDGVTYSNECLLCMENKERQTPVLIQKSGPC) is the Kazal-like domain. 3 disulfide bridges follow: C32-C61, C39-C58, and C47-C79.

It is found in the secreted. Its function is as follows. Serine protease inhibitor which exhibits anti-trypsin activity. In the pancreas, protects against trypsin-catalyzed premature activation of zymogens. In the male reproductive tract, binds to sperm heads where it modulates sperm capacitance by inhibiting calcium uptake and nitrogen oxide (NO) production. The sequence is that of Serine protease inhibitor Kazal-type 1 (SPINK1) from Bos taurus (Bovine).